Here is a 98-residue protein sequence, read N- to C-terminus: MPRIVNPLDEMLFKEVLKEQQRIRVYIERARYGKLKTIIEGIDEKEFDLEDIAKKLKAKLACGGTVKKGRIELQGDHRDRIKKLLADLGFSEELIEVE.

It belongs to the SUI1 family.

This is Protein translation factor SUI1 homolog from Thermococcus gammatolerans (strain DSM 15229 / JCM 11827 / EJ3).